The following is a 364-amino-acid chain: tRNA 2-selenouridine synthase (364 aa).

The Rhodanese domain occupies Phe12 to Glu135. Cys95 functions as the S-selanylcysteine intermediate in the catalytic mechanism.

The protein belongs to the SelU family. As to quaternary structure, monomer.

The enzyme catalyses 5-methylaminomethyl-2-thiouridine(34) in tRNA + selenophosphate + (2E)-geranyl diphosphate + H2O + H(+) = 5-methylaminomethyl-2-selenouridine(34) in tRNA + (2E)-thiogeraniol + phosphate + diphosphate. It catalyses the reaction 5-methylaminomethyl-2-thiouridine(34) in tRNA + (2E)-geranyl diphosphate = 5-methylaminomethyl-S-(2E)-geranyl-thiouridine(34) in tRNA + diphosphate. The catalysed reaction is 5-methylaminomethyl-S-(2E)-geranyl-thiouridine(34) in tRNA + selenophosphate + H(+) = 5-methylaminomethyl-2-(Se-phospho)selenouridine(34) in tRNA + (2E)-thiogeraniol. It carries out the reaction 5-methylaminomethyl-2-(Se-phospho)selenouridine(34) in tRNA + H2O = 5-methylaminomethyl-2-selenouridine(34) in tRNA + phosphate. Its function is as follows. Involved in the post-transcriptional modification of the uridine at the wobble position (U34) of tRNA(Lys), tRNA(Glu) and tRNA(Gln). Catalyzes the conversion of 2-thiouridine (S2U-RNA) to 2-selenouridine (Se2U-RNA). Acts in a two-step process involving geranylation of 2-thiouridine (S2U) to S-geranyl-2-thiouridine (geS2U) and subsequent selenation of the latter derivative to 2-selenouridine (Se2U) in the tRNA chain. The sequence is that of tRNA 2-selenouridine synthase from Pseudomonas fluorescens (strain ATCC BAA-477 / NRRL B-23932 / Pf-5).